A 167-amino-acid chain; its full sequence is N-alpha-acetyltransferase (167 aa).

Residues 12-167 (YRIRNARLTD…EDAYLMAAPL (156 aa)) enclose the N-acetyltransferase domain. Residue Tyr-37 participates in substrate binding. Residue His-88 participates in Zn(2+) binding. Residues 92–94 (IAV) and 100–105 (RLGIGT) each bind acetyl-CoA. Glu-127 provides a ligand contact to Zn(2+). Residues Asn-132 and 139–141 (YKK) each bind acetyl-CoA. A substrate-binding site is contributed by Tyr-154.

It belongs to the acetyltransferase family. ARD1 subfamily. In terms of assembly, homodimer.

Its subcellular location is the cytoplasm. It carries out the reaction N-terminal L-alanyl-[protein] + acetyl-CoA = N-terminal N(alpha)-acetyl-L-alanyl-[protein] + CoA + H(+). The enzyme catalyses N-terminal L-seryl-[protein] + acetyl-CoA = N-terminal N(alpha)-acetyl-L-seryl-[protein] + CoA + H(+). The catalysed reaction is N-terminal L-methionyl-L-leucyl-[protein] + acetyl-CoA = N-terminal N(alpha)-acetyl-L-methionyl-L-leucyl-[protein] + CoA + H(+). It catalyses the reaction N-terminal L-methionyl-L-glutamyl-[protein] + acetyl-CoA = N-terminal N(alpha)-acetyl-L-methionyl-L-glutamyl-[protein] + CoA + H(+). Functionally, displays alpha (N-terminal) acetyltransferase activity. Catalyzes the covalent attachment of an acetyl moiety from acetyl-CoA to the free alpha-amino group at the N-terminus of a protein. This chain is N-alpha-acetyltransferase, found in Sulfurisphaera tokodaii (strain DSM 16993 / JCM 10545 / NBRC 100140 / 7) (Sulfolobus tokodaii).